The chain runs to 9159 residues: MSQTAKPIFAVVVALIVLISGVAFIGSVSAQQPNLVQNGSFENSSNDFSSDNNYNTLVADSTAITGWRVSSGEVDQVGSYWSPQDGSVSIDLSGSEPGVIEQNVTGLEAGKRYELTYYYSGHRVQEGKYEAGVEIADLNITETASSPGDWTLATHTFTADSTAETLTFTQITPSSGAKGMAIDNVSIVESSDPIDTAAPTVSVNQPAGGATLTTSDVALNASANETGNWTYSVDGGPNQTATDANGTKTLNVTLSGLADGSHTATVYIKDDGGNIGIDTVSFTISSAPTVTTSSGGTNYTASTGGFVVDENLTVTNPDGGTIDGATIAIGSGFNASVDTLAIDEAVAPNNSITSTNYNGTTGVLTLDGTASAAEMQTVLRTVTYAYSGETTASARDIDVSFALGTGGNNSSTPTTAQITVTVSSDTTAPSVTIDQPVEGSTLTTGDVAFDASANKTGNWTYSVDGDPNQTATGANGTQTLNVTLSGLADGSHTATVYIKDDGGNVDTDTVSFTVSTASSLTTSSSKTDYTASDGGFVVDDSLTVTSPDDTLINGATVAIGSGFDASEDTLAVNETVASNNNITNTNYNSATGVLTLDGTASADEMQTVLRTVTYTYSGDATASARDLDVSFSLGTGGNIVFDPTTGNYYELVSETVTWKTAKDEAENRSHLGLQGYLATLTSERENDETASRFTFDKAWIGASDASTEGDWKWVTGPERGTLFWEGDESGSEQNGEYAGWASTDPNAIQGENYAFINQNLEWIDQKNGVNYNYLVEYGGLNGSSSPTAQRTVTVDTEAPTLTTSSGSVTNTTASGGYLVDDKLTVTDPDGGGIDTATVSISQGFDPSADRLSVNTTLATNRGITSTYDDTTGVLNVSANSSATVTADDFQAVLRTVTYNFTGTSVTNESDRTVPIRFALDANQEQVTAYDGHYYEYVSDSVSFDTARSEAENRSHLGLEGYLATLTSEQEDDTIHQQFDQESWIGASDAETEGDWKWVTGPENGTLFWKDGSTQNGEYAGWEGGEPNSQNLDENYAEINFDDYTGWNDQVDNQGYLVEYGGLTTDSAITAQRNVTIDTGAPNVSNVTIRRIDGGGVVTTNDTIEVSATVTDVSSIQSVTASAIAFDAGTVNLSDDGPNSSAADDVYSATFTVGPDPIEQTQSVTVTATDDAGNGGTPPGDLVYDSITVNPEGTTDFRTVRLPRSFENPVVIAKPLESTSSGNVAPDNRRGHTRIRNVQSTSFEIRVEEWSVQDDEDHPAANVSYIVAEAGTTTLDDSTKVSAGTITLNQNDGFQSITFEESLNSPVAFTQPQTVNDPDAVSTRNNNVGSNGLDSKIEDDQNNGADGNPHGTETLGYIAIEQGDSVLGETGFTAGTQGNVDETLTSINFGDSYPAGFVAAMQTTGGTEQSYLRYDDRTDTGVRVRIEEDPVDNSDRHNSETVGYLAWNASTQVTGTRSNELSVDTSAPQIDDLSASFTTGSPPVSAGDEFRVTATVTDAGAVSTVEADVAALDADPGTITLDDLGNDTYEGTFEVGQNPDPTRAVAVTVTDSLGNNASATTIAGSQASWDHEVNGTVQTGTFAGNGSAVDPYIIDSLVDLQAINKNATTRAYNYRLGTDIDASTTRSWNDGKGFAPVGAVNGRDIGEPFSGSLDGDGYTISNLSVDQRSTDTNALGLVGKLDSDGAVRNLTLANASVAGDDDIGAAVGKSAGTVRNVTVSGMVDGDQRIGGVVGTVTSTGTVTNTTAVANTSGNQGVGGLIGESSGTVNNASAGGAVTATGQYAGGLIGDHQSSTAVTDVNASGAVTGASYTGGLVGRGQAGVINASANGDVTSTTGEYVGGLVGQLQAQHGDEEVRNVTASGNVSSGGQYVGGLIGDVRDDGTNYVAMSEAHATGNVNTTYADESGFNNAYVGGLVGHFKGSEFTDISATGDVTSTTGNEVGGLVGRVAMEQERDIVANASATGNVTTTGQRVGGLIGYHRTGTILRNVTATGDVSTDGQRVGGLVGDTDASITDASATGEVTTSTSGEYVGGLVGQLQAQHGDEEVRNVTASGNVSSGGRYVGGLIGDVSDDGTHYVAMSEAHATGHVNTTYADESGFNNAYVGGLVGHFEGSEFTDISATGDVTSTAGNEVGGLVGRVAMEQERDIVANASATGNVTTTGQRVGGLIGYHRTGTILRNVTATGDVSTDGQRVGGLVGDTDASITDASATGEVTTSTTGEYVGGLVGQLRAQHGDEEVRNVTASGNVSSGGQYVGGLMGYVDDNNNRGRYVAMSEAHATGNVNTTYADESGFNNAYVGGLVGHFKGSEFTDISATGDVTSTTGNEVGGLVGRVVMRNNGIVANASATGNVTTTGQRVGGLIGYHRTGTILRNVTATGDVSTDGQRVGGLVGDTDASITDASATGEVTTSTTGEYVGGLVGQLRAQHGDEEVRNVTASGNVSSGGQYVGGLMGYVDDNNNEGRYVAMSEAHATGNVNTTYDGGSNAYVGGLVGRFKGSEFTDISATGDVTSTTGNEVGGLVGRVAMRNNGIVANASATGNVTTTGQQIGGLIGYHQNGDGVETSYARGDVSTDGNYVGGLIGDTNDGSITDSYARGDVNSSGDYVGGLVGEANGDVTRAYASGRVEGDGTDIGGLVGTNNGGTLSDAYWDRGATNQTAATGSGTPPGATGYGTVGDTRALEMQGRAPTQFMAALNYTSPWKLTSTYPIFQRESATSGSLPATVDTIEASTATVVQTQQMTVKLNATINGSRVGPGYLITVSDSNGLAELEGQRALTDQNGTATFTFAEQSAGTFTPTFEAVSDLNVTATATVEVNEGAARTYIREDGTELTAVYSGNGTVDDPYEIDSLADLQAINNNTAARDNHYELVANIDTSATNNTSWNNGNGFEPITEYTGSLDGNGRTISNLSINRSGANGVGLVDTLGSEGTIQNLTIQNASITGDNDLGVAVGINNGRVENVTASGTVSGNDRIGGLVGTVNSGGVITASTAAATTSGSKSIGGLVGQNNGAVNNASASGTVTATGQYAGGLIGDHRSTISIVDTNASGAVTGTSSTGGLIGRAQANVTDSSASGRVNGTTGSNVGGLIGEHDPSQVATIANVSASGDVSTSGGVRVGGLVGSSISGSPVTMLNARAEGNVTTSDLSGTDAFTGGLIGEIQNAKNVTNVSATGQVNASIAGNQVVTGRVGGLIGSFEHESASRIVANASATGDVATDTNGQVGGLIGTYSGGGTVEDSNARGNVSATGQSVGGLLGSADASIIRRSSATGDVNSTGSNVGGLIGKHDPSQVATIANVSASGNVSTRNQGAGGLVGAIQTSPVSISDAGASGDVTAAVGSGRGYVGGLIGEIRNAKNVTNVSASGQVNVSANTGFNGEHVGGLIGVIDHESGANIVANASATGDVNADAAGPTGGLIGGTEGTLGTVQDSYAQGNVSGTGPVGGLIGQTNGDTARVYASGRVEGNSGLGGLIGDNSGQISESYWDKGATAQSDATGSGTPGGATGYGSVGDTTPAPQMQGRAATELMDGLHYTTTWNVTRGYPVLQAQSNGTEQPPRTVDTVTATNASAIQSEQVSVSVTVTTAGTDTGTGTAAGLIVSAQDTGGLTSLNNATAVTNETGTATLTITESDTGTFSPTFTVVGYSTATANATVTVSDGAVRTYVREDGEELTAVYSGNGTADNPYLIDSLADLQAIDNSSAARADNYRLAEDIDASATSDASWNDGSGFEPITPFTGSLDGNDTTISNLSINRSGASTAGLVGALDSNGAIQNLTIQNASVTGSDELGVVAGTNDGTIQNLTVEDASIDGVNDLGVAVGTNNGTVQNVTASGAVRGSDRIGGLVGTVNSGGVVTDATTTATANGSQSIGGLVGESNGAVNNASASGTVTATDQYAGGLIGDHQSTTPVTDVNASGAVTGTSYIGGLLGRGQADVINASAGGSVNGTSGGYVGGLIGQAKSSSGNPITVSNAHASGVVNATNTGTDAYTGGLVGEFQNAGNVTDVSATGDVNASEPEGGNLVGGLFGELHHDSADHILTNASATGDVDATGQRVGGLIGYYKDGDGVETSYARGNVSTDGDYVGGLIGDTNNDGSITDSYARGDVTTSGDKVGGLVGETEDVDVTRSYASGRVKGGSTVGGLVGNNTGQLSGAYWDKGATNQTAATGSGSSGGATGFGTVGDDTQALEMQGRAPTQFMSALDYTSPWKLTSTYPVFQRESNTSGSLLAPVDTIEATGTTAVQTQQITVEVNATINGSPVGPGYLINVSDSNGLAELDSKTALTDANGTATFTFAGPTAGTFEPEFEAVSNSAASATATVTVESGAVRTFIREDGTELTAVYRGNGTADSPYEVDSLADLQAIDNSTAAHGDQYTLVANIDASATDESSWNGGGGFEPIANATDEAFTGTLNGNGHTISNLSVDRSGANRAGLVGTLGSNGTIQNLTIQNASITGNNDVGTAVGTSAGTIQNVTASGTVNGNDRIGGVVGEVTADGLVTDSTASVNTSGNQAIGGLVGQSSGAVNNASASGEVTATSKYAGGLIGDHQSTTPVTDVNASGTVSGTSSAGGLIGRAQANVTDATATGDVVSTSGTKVGGLIGNHQAGQTIVDVSATGTVSSDGDDVGGLVGFTRASVRNATASGEVESTTGANVGGLVGRLSHDDSTHVTNVTATGTVSAGADHVGGLVGFIEDSDDNGNITMSGARATGDIEMTSDDGGPASVGGLVGRFEHGSAITDVSATGDVSSVGGNEVGGLIGRLDQLASTDVLKNASATGDVTTTGQKVGGLIGFHRTGSVDNSHAQGNVSAGSGDNVGGLIGVHGRNGGRVGDSYARGDVNTSGNNVGGLIGRSEGKVLRVYATGRVEGGSAVGGLVGKNDGGQLSESYWDKGATDKSDATGSDTPATVSGYGSVGDTTPAPQMQGRAATELMEGLNYTTTWNVTRGYPVLQAKSTGTEQLPRTVDTVTATNASAIQSEQVSVSVTVTTTDSNIREDFVISVQDTGGLTSLENATAVTNDTGVATFNITESSPDTYTPTFGVAGYSTATVNATVTVDNGAVRTYTREDDTELTAVYRGNGTPDSPYLIDTLADLQSINIDSGTRNEQYRLAADIDASATNESSWNGGRGFEPITDFTGSLNGDGYAISNLSIDRGNEASVGLFGDTNAGSSITNVTLVQPAVTGGQGTGPLVGSHGGSISRTVVTGGTATTEADGEAHLGGLVGILVDDAKITQSHTSAIVDANGHNEAGGFAGDIGSNARVEQVSATGGVKNGGSEIGGLFGNASSGSEIVEAFAAGNVSGTTNVGGLLGRQDGSAVTVDRAYWDEQSTGQTSSAGDTETALPTVKMQGTAATEFMPGLNFTTTWNTTRDYPVLQVQTTGTEQPPRTVDTIDATNASLVQSEQVSVSITVTASEADSRNGFLISVQDAAGLTSLENATAVTNETGTAAFNLTESDAGTFTPTFGVAGDASATTNATLTVKQGAVRTYTREDGTALTAVYTGNGTPESPYEIDSLADLQAIDNSSTARNNSYRLTADIDASATIESSWNDGSGFEPIANATDDDEAFTGSLDGDGHTISNLSIDRSGADTVGLFGELDTAGVLENVTLQNASVTGGNDVGLVAGTSNGTLRNVTTTGTVTGNNRVGGLIGTTELNSVLTESSAAVNTSGSQRVGGLVGTAGGIVNTSTANGTVTATGQYAGGLIGESQGTIPVTNTAASGNVTGTADVGGLIGRTNTTVRNSSASGVVNSTSGDGVGGLIGRSLAAVHDSSASGAVSSTGGNSVGGLIGNAGADVTNSAGRGNVISSTGNEVGGLVGRLEDSSNIRDSHARGTVTAAGSDVGGLAGTIDTGNATRVFATGQVEGNSAVGGLVGKNNGGTLSDVYWDKGATNQTNATGSATPTGADGYGLVNDDTPAERMQGEAATAFMSALNYTTTWNTTRGYPVLQAQATGTEQPPRRVETIDATDASSAQTEQVAISITVTAADSESTDGFVITVRESDGLSGLEDATAVTDQDGTATFSFSESNANSYKPTFGVAGDTAVSTTANITVKEGAVRTYTREDGTNLTGTYIGSGTPDDPYLANSLTDLQVINKNATTRDEHYQLTDDINASATIESWNGGNGFEPIANATDEAFTGTLDGNGTTISNLSIDRSGADSVGLISEVGTSGVMENLTLQNASVIGSNDVGVVAGTSNGTIRNVTATGTVAGDNKIGGLVGASNSSAVVADSSTAVTTSGTRQIGGLVGQSSGSVTNSSASGSVTASGGFAGGLVGDLDVTTPEELANVSASGNVSSGGQYVGGLVGLGTSTSSSGNQLTITEAQASGDVNTTYNGGNDAYVGGLAGKLSNVGNVTDVTATGDVSSTSGNDVGGLAGELVHDSTSFTLRNATATGDVTTTGQRVGGLIGAHRNGQALTNATATGNVSTDGNNVGGLIGYQPDDKTVSDVTATGDVSTEGNNAGGLIGQTRASLSDATASGEVQSSTGDKIGGLVGYLKLSAEKTTNVTATGNVSTDGNNVGGLIGHAEGVESTSQTTISTARASGDVTSTDGNDIGGLIGNASFQNDADTVTNASATGDVGTDSATGSSVGGLIGSQSSGQVRNSYARGNVTTSGDNVGGLVGSAAGKQIVDSYARGNITTEGTNVGGIAGKLSGDVKRVYASGQVTGDNKVGGLVGSGGTLSDAYWDKGASTQTNATGNKSGLGTGTPNGVAGYGSIGSDVPATEMQGQSPSKFMSALNYTSTWSLVNGYPQLRAETAPSFASDTTPPTLTSVTSTDGTTIQLTIDGGVSGIDTSSIDNTDFAVSNNSILSTDTNTSGTDTNTTQTVTLSLSSSVETRPVTVDITSQAGGITDRSGNKLSNITTTLPGIDTVSVSDDTNDDGIVTTGDRVQVTVESNTDTNTDTDTDTTLSSVTVNATDYDDETATLSPNGTNVETGASIHSGIIIVGSTPTDGSDQSLTVNVTDDTGNAAVRTIQVSGVTVDTKAPEITSVSRAGGDSVDVSIQSGLSGIEKSSISAADFTVEPGKVASVNTSAVTDGSNQTQTVRIGLTDAIRGKTPTVTINSSSDGILDKAGNGQGEDSTSSNESSDGTESDQGDPEDDIGGINTGIAPAVTLTTSDLDSSTLSTVDVTYNATGEVGSSDDIEIQLYNDNNSTTTPIATRTVGSVEGLTSLTVPSSAVGGGTFTGRATLVNTSAGNTELANKSKQIVAYENVSTSVTAGSLGGKITVKHDFGSLDPANAQIRVSPITIGSKFTTQTVTPAPAQKQGTVTIPVPKQANSRFNVQTEVVDTSRNRQIQSSLGYGCVGSQRDPCSTVSETGTTVVDATTGNSVGIEVNATVDHNRGAVEWYLHPTGSPEQKDISIVDGVDASTPLAVTIAVDDFDPVFMLGTGNADGWEKTGVDKNTKEISINVTPAEAYVEPDIRNPDPREWPLSDHTASKRYGAIVDMIAVSMEGRVNPGYRNHLDGAFIGTNAQAFSVPKSSAGGSDSAGSLSITVAAPHYETDGTTVNTGFYNARIPKSVLAAWGISPGQVTATYKGESVSGSSLTVEDKKGAIFVSMPVTYSSGTVTVSGSQDSSDTTAPTVSNVSLDSDGTGNLTFTVDSNEQLGVATDNVSVSIDGPNTNDVYTFNRDDLIQSGSGPYTYALDLDSAQPYDNGGGTYTATVDTATDSAGNDGGGSGLTDSHDHTVTGSTPTFVSSGTVTTPENPGGTLLDVNAIDGEGGLFDSGVKYTITGGADSSSFTVDGKTGAVSFADSVDFESPADADGDNAYELDVTASTANANATQSISVTITDVDEQPTGQVNLTGGDPGDRTISIVGNKTGYTFDASKIVDPEGTGVSYTWDFGIGDTSTGSTVTRDYDPGSYLEETTVSPTLTVDDGSKQTVIDVSVTFYSDIDGDGLADDNEATGVPTDNDDDNDGIPDDEDQEPALGEMSSISGTITDTNGSRVTQGDVTIISSDGTHRESVSLDSNGKFDTTVPAGNYRLVVENTSAPVHEREDITVGPQTPTSQNLTLEGSGTVAGKFINPDEKSASNIPVQIASRDGGETYYTKTDSTGEYEVAVEPGDYVVAPLGNDSGNASREVSVELGETIQQSVTLDPQPVETAASLSIASGPGSVTADGHQMVVIPEVTDGLLQIQIANNSDPNRDISVVEDPSELENFGVTNETKFRIRVTVTNYTPHTLFWALRDAEFNSKPNATNPTATDIIITGSPVSLATTSTQQKRVGPLVSEDPSTVSWPSGAADTADSQYNQTVYFSVYDLSTRPESLRDRLTGLILSTNAQRISLPEVSNDRLRTWIAGPRYKTASGTKYEGFYQAQIPQSQLEEWGVADHPTHQLFGEYKSSERNLTVEDVDGGISVDVSNISYSASYVDIKADSTAPVPESALEDDSSNQDSGDDSSNQDSGDDSSSQNDDGDNSSNQDSGDDSSSQNDDGDNSSNQDSGDDSSSQNDDGDNSSNQDSGDDSSSQNDDGDDSSSQNDDGDNSSNQDSGDDSSSQNDDGDNSSNQDSGDDSSSQNDDGDNSSNQDSGDDSSSQNDDGDNKPNSAAAVGAESGSEMGGETGGESQAGGGDGSSGSSSDAAGGGSSGGSSSGDSGGSSSGNSGGSSSGNSGGSSSGSGSSTGSMIADALTVITAPLRWFGSLSTAGKAAVAATTGAGAAGAAYGLGGDRIQTPLNIARRRFQSWLRRRIRGSSRSQISKLLARLRRLKWAKIRTQIAGVRKYFTRSYWRELIAKRRRLGSREGMKNWLKSKYRGNRKRKYRGWLRGRLRSGVNWVAGGLLRGAAPAWLGVVSGPAATAVSVITGEIRRWIEDKAMDRFDSTRKRYAKLAIQSSAWITTVETRLWQLLSGEDSPSSSRSLAAIAGESASELNEVGVDSVDQLASADPEQLASALEIDESAVAEWVNRAGHASGSTERPAFIETRNGKRIQARYEQIAEIVQTGVSIPTISVGSVHSITDIGGRQLARVTGWLQGDVSSILSGAFERIQSFSCRLLYRVSIWIYGPSGAVESIDGIGPEYSDRLVQEGITDVAVLSACSAERLSERINVSSSQTYRWITQATAETPDTRGLHQRLVAGVVRVESVFIAMKTKSSVQLESNRLREDHFSSQPLSEKEMNQLAVVGITTVSQLAAINPDRLGAGVGIDTKTAEEWVEMAQVYEMHLNNNS.

A signal peptide spans 1-30 (MSQTAKPIFAVVVALIVLISGVAFIGSVSA). C-type lectin domains lie at 644-776 (TTGN…YLVE) and 929-1060 (YDGH…VEYG). The span at 1310-1332 (QPQTVNDPDAVSTRNNNVGSNGL) shows a compositional bias: polar residues. The interval 1310 to 1351 (QPQTVNDPDAVSTRNNNVGSNGLDSKIEDDQNNGADGNPHGT) is disordered. A V-G-G-L motif-rich region region spans residues 1756 to 3380 (VGGLIGESSG…GFNGEHVGGL (1625 aa)). 8 disordered regions span residues 3484–3514 (GATA…PAPQ), 4878–4912 (ESYW…TTPA), 6570–6589 (TDSA…SSGQ), 7047–7097 (TPTV…GINT), 7660–7702 (ATDS…NPGG), 7888–7923 (IDGD…EPAL), 8212–8237 (STQQ…GAAD), and 8369–8614 (DSTA…GSST). The segment covering 3495 to 3505 (GTPGGATGYGS) has biased composition (gly residues). Basic and acidic residues predominate over residues 4880–4890 (YWDKGATDKSD). Polar residues-rich tracts occupy residues 7048–7057 (PTVTINSSSD) and 7068–7078 (GEDSTSSNESS). Over residues 7079 to 7092 (DGTESDQGDPEDDI) the composition is skewed to acidic residues. Polar residues predominate over residues 7681-7698 (VTGSTPTFVSSGTVTTPE). One can recognise a Cadherin domain in the interval 7686–7793 (PTFVSSGTVT…ITDVDEQPTG (108 aa)). Acidic residues-rich tracts occupy residues 7888–7898 (IDGDGLADDNE) and 7905–7920 (DNDD…EDQE). The span at 8378–8390 (ALEDDSSNQDSGD) shows a compositional bias: acidic residues. 2 stretches are compositionally biased toward low complexity: residues 8391–8529 (DSSN…SSQN) and 8538–8548 (SAAAVGAESGS). 2 stretches are compositionally biased toward gly residues: residues 8549–8566 (EMGG…GDGS) and 8574–8608 (AGGG…GSSS).

Probably glycosylated with sugar containing sialic acid. This may further contribute to its overall negative charge, thereby creating an aqueous shield covering the cells.

Its subcellular location is the secreted. In terms of biological role, may protect the organism from desiccation stress. May also contribute to the rigidity and maintenance of the unique square cell morphology of H.walsbyi. The polypeptide is Halomucin (hmu) (Haloquadratum walsbyi (strain DSM 16790 / HBSQ001)).